Consider the following 432-residue polypeptide: uncharacterized protein (432 aa).

Residues 1-18 (MAIGDKRKKNRKNKQNKK) show a composition bias toward basic residues. Disordered stretches follow at residues 1-23 (MAIGDKRKKNRKNKQNKKNKNDN), 37-56 (NSNSLVNSNNKNNNNKNGNG), and 122-168 (STNS…GSSL). Low complexity-rich tracts occupy residues 37–53 (NSNSLVNSNNKNNNNKN), 122–147 (STNSNNNNNSTNGNSNSPSIIIQQQQ), and 154–168 (ESQSSNNNNNNGSSL). A coiled-coil region spans residues 181–226 (LNDQLKIVQLEQKIVNLEKEIQRMRNEQNQIHKQNLNQYHELLKQI). Disordered regions lie at residues 270 to 290 (VQPVSTPSSSSNSLASKKSNG) and 310 to 432 (SSKF…STLR). The segment covering 274–288 (STPSSSSNSLASKKS) has biased composition (low complexity). Positions 311–324 (SKFAQSNSSPSRVN) are enriched in polar residues. A compositionally biased stretch (low complexity) spans 352–378 (KKSATTTTTSSSSNNATTTTAKGSTST). A compositionally biased stretch (polar residues) spans 383–414 (ITNSNNIKNSVLSPKSITKPNTPSNIIFSPLS).

This is an uncharacterized protein from Dictyostelium discoideum (Social amoeba).